The primary structure comprises 137 residues: Protein Turandot X (137 aa).

The N-terminal stretch at 1-24 (MRVPVFQLSCLLGLIVCLLCSVKA) is a signal peptide.

Belongs to the Turandot family.

It localises to the secreted. Functionally, a humoral factor that may play a role in stress tolerance. This chain is Protein Turandot X, found in Drosophila pseudoobscura pseudoobscura (Fruit fly).